The chain runs to 508 residues: Steroid 17-alpha-hydroxylase/17,20 lyase (508 aa).

N202 contributes to the substrate binding site. Residue C442 participates in heme binding.

It belongs to the cytochrome P450 family. Heme serves as cofactor.

The protein resides in the endoplasmic reticulum membrane. It is found in the microsome membrane. It carries out the reaction a C21-steroid + reduced [NADPH--hemoprotein reductase] + O2 = a 17alpha-hydroxy-C21-steroid + oxidized [NADPH--hemoprotein reductase] + H2O + H(+). The catalysed reaction is progesterone + reduced [NADPH--hemoprotein reductase] + O2 = 17alpha-hydroxyprogesterone + oxidized [NADPH--hemoprotein reductase] + H2O + H(+). The enzyme catalyses pregnenolone + reduced [NADPH--hemoprotein reductase] + O2 = 17alpha-hydroxypregnenolone + oxidized [NADPH--hemoprotein reductase] + H2O + H(+). It catalyses the reaction 17alpha-hydroxyprogesterone + reduced [NADPH--hemoprotein reductase] + O2 = androst-4-ene-3,17-dione + acetate + oxidized [NADPH--hemoprotein reductase] + H2O + 2 H(+). It carries out the reaction 17alpha-hydroxyprogesterone + reduced [NADPH--hemoprotein reductase] + O2 = 16alpha,17alpha-dihydroxyprogesterone + oxidized [NADPH--hemoprotein reductase] + H2O + H(+). The catalysed reaction is 16alpha,17alpha-dihydroxyprogesterone + reduced [NADPH--hemoprotein reductase] + O2 = 6beta,16alpha,17alpha-trihydroxyprogesterone + oxidized [NADPH--hemoprotein reductase] + H2O + H(+). The enzyme catalyses 17alpha-hydroxypregnenolone + reduced [NADPH--hemoprotein reductase] + O2 = 3beta-hydroxyandrost-5-en-17-one + acetate + oxidized [NADPH--hemoprotein reductase] + H2O + 2 H(+). It catalyses the reaction 16alpha,17alpha-dihydroxypregnenolone + reduced [NADPH--hemoprotein reductase] + O2 = 3beta,16alpha-dihydroxy-androst-5-en-17-one + acetate + oxidized [NADPH--hemoprotein reductase] + H2O + 2 H(+). It carries out the reaction 3beta-hydroxyandrost-5-en-17-one + reduced [NADPH--hemoprotein reductase] + O2 = 3beta,16alpha-dihydroxy-androst-5-en-17-one + oxidized [NADPH--hemoprotein reductase] + H2O + H(+). The catalysed reaction is androst-4-ene-3,17-dione + reduced [NADPH--hemoprotein reductase] + O2 = 16alpha-hydroxyandrost-4-ene-3,17-dione + oxidized [NADPH--hemoprotein reductase] + H2O + H(+). It functions in the pathway steroid hormone biosynthesis. The protein operates within steroid biosynthesis; glucocorticoid biosynthesis. Its activity is regulated as follows. Regulated predominantly by intracellular cAMP levels. The 17,20-lyase activity is stimulated by cytochrome b5, which acts as an allosteric effector increasing the Vmax of the lyase activity. Its function is as follows. A cytochrome P450 monooxygenase involved in corticoid and androgen biosynthesis. Catalyzes 17-alpha hydroxylation of C21 steroids, which is common for both pathways. A second oxidative step, required only for androgen synthesis, involves an acyl-carbon cleavage. The 17-alpha hydroxy intermediates, as part of adrenal glucocorticoids biosynthesis pathway, are precursors of cortisol. Hydroxylates steroid hormones, pregnenolone and progesterone to form 17-alpha hydroxy metabolites, followed by the cleavage of the C17-C20 bond to form C19 steroids, dehydroepiandrosterone (DHEA) and androstenedione. Has 16-alpha hydroxylase activity. Catalyzes 16-alpha hydroxylation of 17-alpha hydroxy pregnenolone, followed by the cleavage of the C17-C20 bond to form 16-alpha-hydroxy DHEA. Also 16-alpha hydroxylates androgens, relevant for estriol synthesis. Mechanistically, uses molecular oxygen inserting one oxygen atom into a substrate, and reducing the second into a water molecule, with two electrons provided by NADPH via cytochrome P450 reductase (CPR; NADPH-ferrihemoprotein reductase). This is Steroid 17-alpha-hydroxylase/17,20 lyase (CYP17A1) from Pan troglodytes (Chimpanzee).